The sequence spans 405 residues: Serpin B12 (405 aa).

The segment at 64–83 is disordered; sequence SQNESKEPDPCLKSNKQKAG.

Belongs to the serpin family. Ov-serpin subfamily. Interacts with SLFN12; as part of a pathway regulating cell differentiation. May interact with USP14. In terms of tissue distribution, expressed in many tissues, including brain, bone marrow, lymph node, heart, lung, liver, pancreas, testis, ovary, and intestine.

The protein resides in the cytoplasm. Functionally, inhibits trypsin and plasmin, but not thrombin, coagulation factor Xa, or urokinase-type plasminogen activator. May play a role in cell differentiation. The chain is Serpin B12 (SERPINB12) from Homo sapiens (Human).